Consider the following 269-residue polypeptide: Integral membrane protein 2C (269 aa).

At threonine 39 the chain carries Phosphothreonine. A helical; Signal-anchor for type II membrane protein transmembrane segment spans residues 57 to 77; the sequence is VGGVCYLSMGMVVLLMGLVFA. Residues 138 to 232 enclose the BRICHOS domain; that stretch reads FGGGDPADII…LCNGKDTYRL (95 aa). Cysteine 165 and cysteine 224 are disulfide-bonded. A glycan (N-linked (GlcNAc...) asparagine) is linked at asparagine 171.

It belongs to the ITM2 family. As to quaternary structure, interacts with BACE1. Interacts with APP. Interacts with STMN2. Type I membrane-bound, as well as soluble, furin has a pre-eminent role in ITM2C proteolytic processing. PCSK7 and PCSK5 may also be involved although to a lesser extent. The soluble form of PCSK7 is incapable of processing ITM2C. Fails to undergo shedding by ADAM10 and intramembrane cleavage by SPPL2B.

The protein localises to the lysosome membrane. It is found in the cell membrane. Its function is as follows. Negative regulator of amyloid-beta peptide production. May inhibit the processing of APP by blocking its access to alpha- and beta-secretase. Binding to the beta-secretase-cleaved APP C-terminal fragment is negligible, suggesting that ITM2C is a poor gamma-secretase cleavage inhibitor. May play a role in TNF-induced cell death and neuronal differentiation. This chain is Integral membrane protein 2C (Itm2c), found in Rattus norvegicus (Rat).